The chain runs to 154 residues: Interleukin-2 (154 aa).

An N-terminal signal peptide occupies residues 1–20 (MYKIQLLSCIALTLILVTNS). An intrachain disulfide couples Cys-78 to Cys-126. A glycan (N-linked (GlcNAc...) asparagine) is linked at Asn-111.

It belongs to the IL-2 family.

The protein resides in the secreted. In terms of biological role, cytokine produced by activated CD4-positive helper T-cells and to a lesser extend activated CD8-positive T-cells and natural killer (NK) cells that plays pivotal roles in the immune response and tolerance. Binds to a receptor complex composed of either the high-affinity trimeric IL-2R (IL2RA/CD25, IL2RB/CD122 and IL2RG/CD132) or the low-affinity dimeric IL-2R (IL2RB and IL2RG). Interaction with the receptor leads to oligomerization and conformation changes in the IL-2R subunits resulting in downstream signaling starting with phosphorylation of JAK1 and JAK3. In turn, JAK1 and JAK3 phosphorylate the receptor to form a docking site leading to the phosphorylation of several substrates including STAT5. This process leads to activation of several pathways including STAT, phosphoinositide-3-kinase/PI3K and mitogen-activated protein kinase/MAPK pathways. Functions as a T-cell growth factor and can increase NK-cell cytolytic activity as well. Promotes strong proliferation of activated B-cells and subsequently immunoglobulin production. Plays a pivotal role in regulating the adaptive immune system by controlling the survival and proliferation of regulatory T-cells, which are required for the maintenance of immune tolerance. Moreover, participates in the differentiation and homeostasis of effector T-cell subsets, including Th1, Th2, Th17 as well as memory CD8-positive T-cells. The protein is Interleukin-2 (IL2) of Felis catus (Cat).